The chain runs to 683 residues: DNA ligase (683 aa).

Residues D35–D39, S81–L82, and E112 contribute to the NAD(+) site. K114 functions as the N6-AMP-lysine intermediate in the catalytic mechanism. R135, E170, K277, and K301 together coordinate NAD(+). Zn(2+)-binding residues include C395, C398, C411, and C417. The BRCT domain occupies S601–E683.

It belongs to the NAD-dependent DNA ligase family. LigA subfamily. The cofactor is Mg(2+). Mn(2+) is required as a cofactor.

It carries out the reaction NAD(+) + (deoxyribonucleotide)n-3'-hydroxyl + 5'-phospho-(deoxyribonucleotide)m = (deoxyribonucleotide)n+m + AMP + beta-nicotinamide D-nucleotide.. DNA ligase that catalyzes the formation of phosphodiester linkages between 5'-phosphoryl and 3'-hydroxyl groups in double-stranded DNA using NAD as a coenzyme and as the energy source for the reaction. It is essential for DNA replication and repair of damaged DNA. The sequence is that of DNA ligase from Wolbachia sp. subsp. Brugia malayi (strain TRS).